The sequence spans 371 residues: UDP-N-acetylglucosamine--N-acetylmuramyl-(pentapeptide) pyrophosphoryl-undecaprenol N-acetylglucosamine transferase (371 aa).

UDP-N-acetyl-alpha-D-glucosamine contacts are provided by residues 15-17 (TGG), Asn126, Arg172, Ser199, Ile256, 275-280 (ALTVSE), and Gln301.

It belongs to the glycosyltransferase 28 family. MurG subfamily.

It is found in the cell inner membrane. It catalyses the reaction di-trans,octa-cis-undecaprenyl diphospho-N-acetyl-alpha-D-muramoyl-L-alanyl-D-glutamyl-meso-2,6-diaminopimeloyl-D-alanyl-D-alanine + UDP-N-acetyl-alpha-D-glucosamine = di-trans,octa-cis-undecaprenyl diphospho-[N-acetyl-alpha-D-glucosaminyl-(1-&gt;4)]-N-acetyl-alpha-D-muramoyl-L-alanyl-D-glutamyl-meso-2,6-diaminopimeloyl-D-alanyl-D-alanine + UDP + H(+). The protein operates within cell wall biogenesis; peptidoglycan biosynthesis. Cell wall formation. Catalyzes the transfer of a GlcNAc subunit on undecaprenyl-pyrophosphoryl-MurNAc-pentapeptide (lipid intermediate I) to form undecaprenyl-pyrophosphoryl-MurNAc-(pentapeptide)GlcNAc (lipid intermediate II). The sequence is that of UDP-N-acetylglucosamine--N-acetylmuramyl-(pentapeptide) pyrophosphoryl-undecaprenol N-acetylglucosamine transferase from Francisella tularensis subsp. mediasiatica (strain FSC147).